A 505-amino-acid polypeptide reads, in one-letter code: Glycerol kinase (505 aa).

Thr-12 is an ADP binding site. ATP-binding residues include Thr-12, Thr-13, and Ser-14. Position 12 (Thr-12) interacts with sn-glycerol 3-phosphate. Arg-16 serves as a coordination point for ADP. Sn-glycerol 3-phosphate contacts are provided by Arg-82, Glu-83, Tyr-134, and Asp-246. Residues Arg-82, Glu-83, Tyr-134, Asp-246, and Gln-247 each coordinate glycerol. ADP-binding residues include Thr-268 and Gly-312. Positions 268, 312, 316, and 413 each coordinate ATP. Residues Gly-413 and Asn-417 each coordinate ADP.

It belongs to the FGGY kinase family.

It catalyses the reaction glycerol + ATP = sn-glycerol 3-phosphate + ADP + H(+). It functions in the pathway polyol metabolism; glycerol degradation via glycerol kinase pathway; sn-glycerol 3-phosphate from glycerol: step 1/1. Its activity is regulated as follows. Inhibited by fructose 1,6-bisphosphate (FBP). Its function is as follows. Key enzyme in the regulation of glycerol uptake and metabolism. Catalyzes the phosphorylation of glycerol to yield sn-glycerol 3-phosphate. This Beutenbergia cavernae (strain ATCC BAA-8 / DSM 12333 / CCUG 43141 / JCM 11478 / NBRC 16432 / NCIMB 13614 / HKI 0122) protein is Glycerol kinase.